A 919-amino-acid polypeptide reads, in one-letter code: Rho guanine nucleotide exchange factor 1 (919 aa).

The region spanning 39–230 is the RGSL domain; it reads DQNSQFQSLE…SLYMRHLGVR (192 aa). The tract at residues 247–402 is disordered; that stretch reads VMGNRRSDEP…PPGWRELVPS (156 aa). A compositionally biased stretch (basic and acidic residues) spans 281-310; the sequence is DCRHLKVEVDEKPGPADRKGSLGISSRDRT. Residues 363 to 379 are compositionally biased toward acidic residues; that stretch reads STEDNGETESPEPGDDG. A Phosphoserine modification is found at S372. The DH domain maps to 414–603; that stretch reads KRQEVISELL…REILHHVNQA (190 aa). The region spanning 645-758 is the PH domain; it reads KLVHEGPLTW…WCALITETAG (114 aa). T693 bears the Phosphothreonine mark. At Y736 the chain carries Phosphotyrosine; by JAK2. Disordered regions lie at residues 761–800 and 839–865; these read KVPA…PADA and TEED…PTHT. Low complexity predominate over residues 775 to 787; it reads PSSTREPLLSSSE. Residues 864–893 are a coiled coil; that stretch reads HTQEVEENLLSLEVVIKQLEELEEEFCRLR. Phosphoserine is present on S904.

As to quaternary structure, interacts with RHOA, GNA12 and GNA13. Homooligomerizes through the coiled coil region. Interacts with CTNNAL1. May interact with CCPG1. In terms of processing, phosphorylated by PKCA. Angiotensin-2 induced Tyr-736 phosphorylation is mediated by JAK2.

Its subcellular location is the cytoplasm. It localises to the membrane. Seems to play a role in the regulation of RhoA GTPase by guanine nucleotide-binding alpha-12 (GNA12) and alpha-13 (GNA13) subunits. Acts as a GTPase-activating protein (GAP) for GNA12 and GNA13, and as guanine nucleotide exchange factor (GEF) for RhoA GTPase. Activated G alpha 13/GNA13 stimulates the RhoGEF activity through interaction with the RGS-like domain. This GEF activity is inhibited by binding to activated GNA12. Mediates angiotensin-2-induced RhoA activation. In lymphoid follicles, may trigger activation of GNA13 as part of S1PR2-dependent signaling pathway that leads to inhibition of germinal center (GC) B cell growth and migration outside the GC niche. The protein is Rho guanine nucleotide exchange factor 1 (Arhgef1) of Rattus norvegicus (Rat).